The sequence spans 207 residues: N-(5'-phosphoribosyl)anthranilate isomerase (207 aa).

It belongs to the TrpF family.

It carries out the reaction N-(5-phospho-beta-D-ribosyl)anthranilate = 1-(2-carboxyphenylamino)-1-deoxy-D-ribulose 5-phosphate. The protein operates within amino-acid biosynthesis; L-tryptophan biosynthesis; L-tryptophan from chorismate: step 3/5. In Legionella pneumophila (strain Corby), this protein is N-(5'-phosphoribosyl)anthranilate isomerase.